The chain runs to 362 residues: Homoserine O-acetyltransferase FUB5 (362 aa).

Residues Asn12–Leu335 enclose the AB hydrolase-1 domain. Ser110 serves as the catalytic Nucleophile. The tract at residues Arg195–Val232 is disordered. Positions Gln208 to His222 are enriched in polar residues. Catalysis depends on residues Asp302 and His331.

This sequence belongs to the AB hydrolase superfamily. MetX family.

The enzyme catalyses L-homoserine + acetyl-CoA = O-acetyl-L-homoserine + CoA. The protein operates within mycotoxin biosynthesis. Its function is as follows. Homoserine O-acetyltransferase; part of the gene cluster that mediates the biosynthesis of fusaric acid, a mycotoxin with low to moderate toxicity to animals and humans, but with high phytotoxic properties. L-aspartate is suggested as fusaric acid amino acid precursor that is activated and further processed to O-acetyl-L-homoserine by cluster enzymes aspartate kinase FUB3 and homoserine O-acetyltransferase FUB5, as well as enzymes of the primary metabolism. The polyketide synthase (PKS) FUB1 generates the triketide trans-2-hexenal which is presumptively released by the hydrolase FUB4 and linked to the NRPS-bound amino acid precursor by NAD(P)-dependent dehydrogenase FUB6. FUB1, FUB4, and the non-canonical NRPS Fub8 may form an enzyme complex. Further processing of the NRPS-bound intermediate might be carried out by FUB6 and the O-acetylhomoserine FUB7, enabling a spontaneous electrocyclization to close the carbon backbone of fusaric acid. Dihydrofusaric acid is likely to be released via reduction by the thioester reductase (TR) domain of FUB8 whereupon the final oxidation to fusaric acid may (also) be performed by the FMN-dependent dehydrogenase FUB9. This Fusarium oxysporum f. sp. lycopersici (strain 4287 / CBS 123668 / FGSC 9935 / NRRL 34936) (Fusarium vascular wilt of tomato) protein is Homoserine O-acetyltransferase FUB5.